An 81-amino-acid polypeptide reads, in one-letter code: ATP synthase subunit c (81 aa).

The next 2 helical transmembrane spans lie at 7–27 and 57–77; these read AASVLAAALAVGLAAIGPGIG and LAFMEALTIYGLVVALVLLFA.

It belongs to the ATPase C chain family. F-type ATPases have 2 components, F(1) - the catalytic core - and F(0) - the membrane proton channel. F(1) has five subunits: alpha(3), beta(3), gamma(1), delta(1), epsilon(1). F(0) has four main subunits: a(1), b(1), b'(1) and c(10-14). The alpha and beta chains form an alternating ring which encloses part of the gamma chain. F(1) is attached to F(0) by a central stalk formed by the gamma and epsilon chains, while a peripheral stalk is formed by the delta, b and b' chains.

It localises to the cellular thylakoid membrane. Its function is as follows. F(1)F(0) ATP synthase produces ATP from ADP in the presence of a proton or sodium gradient. F-type ATPases consist of two structural domains, F(1) containing the extramembraneous catalytic core and F(0) containing the membrane proton channel, linked together by a central stalk and a peripheral stalk. During catalysis, ATP synthesis in the catalytic domain of F(1) is coupled via a rotary mechanism of the central stalk subunits to proton translocation. Functionally, key component of the F(0) channel; it plays a direct role in translocation across the membrane. A homomeric c-ring of between 10-14 subunits forms the central stalk rotor element with the F(1) delta and epsilon subunits. In Nostoc sp. (strain PCC 7120 / SAG 25.82 / UTEX 2576), this protein is ATP synthase subunit c.